Consider the following 663-residue polypeptide: UvrABC system protein B (663 aa).

The Helicase ATP-binding domain maps to D31–E271. G44–T51 serves as a coordination point for ATP. The Beta-hairpin motif lies at Y97–V120. In terms of domain architecture, Helicase C-terminal spans Q435 to I601. The region spanning Q627–M662 is the UVR domain.

Belongs to the UvrB family. Forms a heterotetramer with UvrA during the search for lesions. Interacts with UvrC in an incision complex.

The protein localises to the cytoplasm. The UvrABC repair system catalyzes the recognition and processing of DNA lesions. A damage recognition complex composed of 2 UvrA and 2 UvrB subunits scans DNA for abnormalities. Upon binding of the UvrA(2)B(2) complex to a putative damaged site, the DNA wraps around one UvrB monomer. DNA wrap is dependent on ATP binding by UvrB and probably causes local melting of the DNA helix, facilitating insertion of UvrB beta-hairpin between the DNA strands. Then UvrB probes one DNA strand for the presence of a lesion. If a lesion is found the UvrA subunits dissociate and the UvrB-DNA preincision complex is formed. This complex is subsequently bound by UvrC and the second UvrB is released. If no lesion is found, the DNA wraps around the other UvrB subunit that will check the other stand for damage. The protein is UvrABC system protein B of Streptococcus uberis (strain ATCC BAA-854 / 0140J).